A 635-amino-acid chain; its full sequence is Allantoin permease (635 aa).

Residues 1–144 (MANDALSAIF…AGTGLQLGLN (144 aa)) lie on the Cytoplasmic side of the membrane. The helical transmembrane segment at 145-165 (WWQCWLTVWIGYTFAGIFVVL) threads the bilayer. The Extracellular portion of the chain corresponds to 166–174 (NSRFGSAYH). The chain crosses the membrane as a helical span at residues 175-195 (LSFPITVRASFGIFFSMWPII). Over 196-198 (NRV) the chain is Cytoplasmic. Residues 199–219 (VMAIVWYAVQAWLGATPVALM) traverse the membrane as a helical segment. Topologically, residues 220 to 243 (LKSIFGKNLEDRIPNHFGSPNSTT) are extracellular. The helical transmembrane segment at 244–264 (FEFMCFFIFWVVSIPFVLVAP) threads the bilayer. Residues 265 to 269 (HKIRH) are Cytoplasmic-facing. The helical transmembrane segment at 270 to 290 (LFTVKAALIPFAAFGFLIWAL) threads the bilayer. The Extracellular segment spans residues 291 to 311 (KKSHGKIELGTLNDYSPHGSE). A helical membrane pass occupies residues 312–332 (FSWIFVRSLMACVANFAALII). The Cytoplasmic segment spans residues 333–351 (NAPDFGRFAKNPQASLWPQ). Residues 352 to 372 (LVAIPLFFAITCLIGIIVTAA) form a helical membrane-spanning segment. The Extracellular portion of the chain corresponds to 373–401 (GYHLYGVNYWSPLDVLGQFLETTYTRGTR). A helical membrane pass occupies residues 402–422 (AGVFLISFVFALAQLGTNISA). Residues 423–443 (NSLACGADMTALFPRYINIRR) are Cytoplasmic-facing. The chain crosses the membrane as a helical span at residues 444–464 (GSLFCVAMALCICPWNLMASS). Residues 465-466 (SK) lie on the Extracellular side of the membrane. Residues 467–487 (FTSALGAYAIFLSSIAGVICA) traverse the membrane as a helical segment. At 488-522 (DYFVVRRGYVKLTHLFLAQKGSFYMFGNKFGANWR) the chain is on the cytoplasmic side. The helical transmembrane segment at 523 to 543 (AFVAYICGIAPNLPGFIGDVG) threads the bilayer. The Extracellular portion of the chain corresponds to 544–560 (APKITVSEGAMRLYYLG). Residues 561–581 (YPVGFFISAVIYLILCYFFPV) form a helical membrane-spanning segment. Residues 582–635 (PGTPVTNFLTEKGWFQRWAYVEDFEQDWKNELRRDDLCDDTVSIYDGTEEKIVY) lie on the Cytoplasmic side of the membrane.

This sequence belongs to the purine-cytosine permease (2.A.39) family.

The protein localises to the membrane. In terms of biological role, transport of allantoin. This is Allantoin permease (DAL4) from Saccharomyces cerevisiae (strain ATCC 204508 / S288c) (Baker's yeast).